The chain runs to 1008 residues: Ubiquitin carboxyl-terminal hydrolase 16 (1008 aa).

A helical membrane pass occupies residues 7 to 27 (LGISSLVLVVSLVLPLIGLFV). Zn(2+) is bound by residues Cys74, Cys77, Cys85, Cys88, Cys94, Cys98, His107, and Cys111. An MYND-type zinc finger spans residues 74 to 111 (CPVCYCLATTRCSRCKAVRYCSGKCQIIHWRQGHKDEC). 5 disordered regions span residues 122–149 (DESDSDLRLGEENGQNTPEETLLVGPEP), 159–178 (LSNRARSPEDGNGDIADNKD), 187–233 (VSVA…LDAH), 275–309 (SVHKPEDDAGQNQSQSRSLHSLVTDRHPVSADPSL), and 326–379 (SDSC…YISD). Residues 193 to 203 (SGSSFSGFSSS) are compositionally biased toward low complexity. The segment covering 222 to 233 (ESERSESLLDAH) has biased composition (basic and acidic residues). A compositionally biased stretch (polar residues) spans 284–295 (GQNQSQSRSLHS). A compositionally biased stretch (low complexity) spans 340 to 351 (SSLHFSFGSGSS). The USP domain maps to 542 to 847 (CGLINVGNSC…GAYMLFYARC (306 aa)). Cys551 acts as the Nucleophile in catalysis. His807 serves as the catalytic Proton acceptor. 2 disordered regions span residues 859-905 (KTEA…GNIQ) and 952-1008 (FIFG…GGER). Composition is skewed to low complexity over residues 878–888 (STISRSVSTSS) and 965–992 (SETPSPTSSSSSSSPPFTRRSPLSRSSP).

The protein belongs to the peptidase C19 family. Interacts with SHM1 and SHM4. Interacts with HIPP27. In terms of tissue distribution, expressed in flowers, siliques, rosette leaves, cauline leaves, stems and at a lower level in roots. In roots, expressed in the sieve elements.

It localises to the membrane. The enzyme catalyses Thiol-dependent hydrolysis of ester, thioester, amide, peptide and isopeptide bonds formed by the C-terminal Gly of ubiquitin (a 76-residue protein attached to proteins as an intracellular targeting signal).. Functionally, recognizes and hydrolyzes the peptide bond at the C-terminal Gly of ubiquitin. Involved in the processing of poly-ubiquitin precursors as well as that of ubiquitinated proteins. Involved in salt tolerance by modulating sodium transport activity and repressing cell death at least partially through modulating SHM1 stability and activity. Involved in cadmium tolerance by interacting with HIPP27 and probably modulating its stability. This chain is Ubiquitin carboxyl-terminal hydrolase 16 (UBP16), found in Arabidopsis thaliana (Mouse-ear cress).